The primary structure comprises 406 residues: Bifunctional enzyme IspD/IspF (406 aa).

A 2-C-methyl-D-erythritol 4-phosphate cytidylyltransferase region spans residues Met-1 to Thr-247. Positions Phe-248 to Leu-406 are 2-C-methyl-D-erythritol 2,4-cyclodiphosphate synthase. Residues Asp-254 and His-256 each coordinate a divalent metal cation. 4-CDP-2-C-methyl-D-erythritol 2-phosphate is bound by residues Asp-254 to His-256 and His-280 to Ser-281. His-288 serves as a coordination point for a divalent metal cation. 4-CDP-2-C-methyl-D-erythritol 2-phosphate-binding positions include Asp-302–Gly-304, Phe-307–Asp-311, Thr-378–Glu-381, Phe-385, and Lys-388.

In the N-terminal section; belongs to the IspD/TarI cytidylyltransferase family. IspD subfamily. The protein in the C-terminal section; belongs to the IspF family. A divalent metal cation is required as a cofactor.

The enzyme catalyses 2-C-methyl-D-erythritol 4-phosphate + CTP + H(+) = 4-CDP-2-C-methyl-D-erythritol + diphosphate. It catalyses the reaction 4-CDP-2-C-methyl-D-erythritol 2-phosphate = 2-C-methyl-D-erythritol 2,4-cyclic diphosphate + CMP. It participates in isoprenoid biosynthesis; isopentenyl diphosphate biosynthesis via DXP pathway; isopentenyl diphosphate from 1-deoxy-D-xylulose 5-phosphate: step 2/6. It functions in the pathway isoprenoid biosynthesis; isopentenyl diphosphate biosynthesis via DXP pathway; isopentenyl diphosphate from 1-deoxy-D-xylulose 5-phosphate: step 4/6. Its function is as follows. Bifunctional enzyme that catalyzes the formation of 4-diphosphocytidyl-2-C-methyl-D-erythritol from CTP and 2-C-methyl-D-erythritol 4-phosphate (MEP) (IspD), and catalyzes the conversion of 4-diphosphocytidyl-2-C-methyl-D-erythritol 2-phosphate (CDP-ME2P) to 2-C-methyl-D-erythritol 2,4-cyclodiphosphate (ME-CPP) with a corresponding release of cytidine 5-monophosphate (CMP) (IspF). This Helicobacter pylori (strain Shi470) protein is Bifunctional enzyme IspD/IspF.